An 80-amino-acid chain; its full sequence is Putative defensin-like protein 23 (80 aa).

A signal peptide spans 1–25 (MTTTMKIMSFAMLLVLLFSIDVVEG). Intrachain disulfides connect Cys-31-Cys-80, Cys-41-Cys-66, Cys-50-Cys-76, and Cys-54-Cys-78.

The protein belongs to the DEFL family.

It localises to the secreted. This Arabidopsis thaliana (Mouse-ear cress) protein is Putative defensin-like protein 23.